A 660-amino-acid chain; its full sequence is ATP-dependent RNA helicase DDX18 (660 aa).

Residues 16 to 153 (RNAKLRQRNL…DVKKADDSEV (138 aa)) form a disordered region. Residues 25–40 (LKLQETSDTSLSQPQN) are compositionally biased toward polar residues. Residues 124–133 (PDTKKAKTEE) show a composition bias toward basic and acidic residues. Positions 134–143 (SAEACEEPED) are enriched in acidic residues. Residues 169–197 (FASLSNLVNENTLKAIEEMGFKRMTEIQH) carry the Q motif motif. Positions 200-375 (IRPLLEGRDL…RISLKKEPLY (176 aa)) constitute a Helicase ATP-binding domain. ATP is bound at residue 213-220 (AKTGSGKT). Residues 323–326 (DEAD) carry the DEAD box motif. A Helicase C-terminal domain is found at 389–559 (GLEQGYVVCP…DIQSQLEKLI (171 aa)).

This sequence belongs to the DEAD box helicase family. DDX18/HAS1 subfamily. Interacts with NOL8; the interaction is RNA-dependent. Interacts with PRC2 complex components EZH2, SUZ2 and JARID2; these interactions prevent deposition of the repressive H3K27me3 mark onto rDNA in pluripotent cells.

Its subcellular location is the nucleus. It is found in the nucleolus. It localises to the chromosome. It carries out the reaction ATP + H2O = ADP + phosphate + H(+). In terms of biological role, ATP-dependent RNA helicase that plays a role in the regulation of R-loop homeostasis in both endogenous R-loop-prone regions and at sites of DNA damage. At endogenous loci such as actively transcribed genes, may act as a helicase to resolve the formation of R-loop during transcription and prevent the interference of R-loop with DNA-replication machinery. Also participates in the removal of DNA-lesion-associated R-loop. Plays an essential role for establishing pluripotency during embryogenesis and for pluripotency maintenance in embryonic stem cells. Mechanistically, prevents the polycomb repressive complex 2 (PRC2) from accessing rDNA loci and protects the active chromatin status in nucleolus. The sequence is that of ATP-dependent RNA helicase DDX18 (Ddx18) from Mus musculus (Mouse).